Here is a 273-residue protein sequence, read N- to C-terminus: Dermonecrotic toxin LspaSicTox-alphaIA2iv (273 aa).

Residue histidine 5 is part of the active site. 2 residues coordinate Mg(2+): glutamate 25 and aspartate 27. The active-site Nucleophile is the histidine 41. Disulfide bonds link cysteine 45–cysteine 51 and cysteine 47–cysteine 190. Aspartate 85 serves as a coordination point for Mg(2+).

This sequence belongs to the arthropod phospholipase D family. Class II subfamily. The cofactor is Mg(2+). As to expression, expressed by the venom gland.

It is found in the secreted. It catalyses the reaction an N-(acyl)-sphingosylphosphocholine = an N-(acyl)-sphingosyl-1,3-cyclic phosphate + choline. The enzyme catalyses an N-(acyl)-sphingosylphosphoethanolamine = an N-(acyl)-sphingosyl-1,3-cyclic phosphate + ethanolamine. It carries out the reaction a 1-acyl-sn-glycero-3-phosphocholine = a 1-acyl-sn-glycero-2,3-cyclic phosphate + choline. The catalysed reaction is a 1-acyl-sn-glycero-3-phosphoethanolamine = a 1-acyl-sn-glycero-2,3-cyclic phosphate + ethanolamine. Dermonecrotic toxins cleave the phosphodiester linkage between the phosphate and headgroup of certain phospholipids (sphingolipid and lysolipid substrates), forming an alcohol (often choline) and a cyclic phosphate. This toxin acts on sphingomyelin (SM). It may also act on ceramide phosphoethanolamine (CPE), lysophosphatidylcholine (LPC) and lysophosphatidylethanolamine (LPE), but not on lysophosphatidylserine (LPS), and lysophosphatidylglycerol (LPG). It acts by transphosphatidylation, releasing exclusively cyclic phosphate products as second products. Induces dermonecrosis, hemolysis, increased vascular permeability, edema, inflammatory response, and platelet aggregation. The sequence is that of Dermonecrotic toxin LspaSicTox-alphaIA2iv from Loxosceles spadicea (Recluse spider).